The sequence spans 313 residues: Protoheme IX farnesyltransferase (313 aa).

8 helical membrane passes run 34–54 (VIEL…RGTV), 56–76 (PLLI…ANTL), 105–125 (HALI…WWTT), 128–148 (LSAH…TLVL), 152–172 (TSQN…IGWS), 173–193 (AVTG…FFWT), 243–263 (LALA…TWFL), and 291–311 (YLAV…PTLF).

It belongs to the UbiA prenyltransferase family. Protoheme IX farnesyltransferase subfamily.

It is found in the cell membrane. The enzyme catalyses heme b + (2E,6E)-farnesyl diphosphate + H2O = Fe(II)-heme o + diphosphate. It participates in porphyrin-containing compound metabolism; heme O biosynthesis; heme O from protoheme: step 1/1. Its function is as follows. Converts heme B (protoheme IX) to heme O by substitution of the vinyl group on carbon 2 of heme B porphyrin ring with a hydroxyethyl farnesyl side group. This chain is Protoheme IX farnesyltransferase, found in Mycolicibacterium vanbaalenii (strain DSM 7251 / JCM 13017 / BCRC 16820 / KCTC 9966 / NRRL B-24157 / PYR-1) (Mycobacterium vanbaalenii).